A 456-amino-acid chain; its full sequence is Bifunctional protein GlmU (456 aa).

The interval 1-229 (MLNNAMSVVI…LSEVEGVNNR (229 aa)) is pyrophosphorylase. UDP-N-acetyl-alpha-D-glucosamine-binding positions include 11-14 (LAAG), Lys-25, Gln-76, 81-82 (GT), 103-105 (YGD), Gly-140, Glu-154, Asn-169, and Asn-227. Asp-105 contacts Mg(2+). Asn-227 provides a ligand contact to Mg(2+). The segment at 230–250 (LQLSRLERVYQSEQAEKLLLA) is linker. The tract at residues 251–456 (GVMLRDPARF…EGWRRPVKKK (206 aa)) is N-acetyltransferase. UDP-N-acetyl-alpha-D-glucosamine contacts are provided by Arg-333 and Lys-351. Residue His-363 is the Proton acceptor of the active site. UDP-N-acetyl-alpha-D-glucosamine contacts are provided by Tyr-366 and Asn-377. Residues Ala-380, 386–387 (NY), Ser-405, Ala-423, and Arg-440 contribute to the acetyl-CoA site.

The protein in the N-terminal section; belongs to the N-acetylglucosamine-1-phosphate uridyltransferase family. In the C-terminal section; belongs to the transferase hexapeptide repeat family. Homotrimer. Mg(2+) serves as cofactor.

Its subcellular location is the cytoplasm. It carries out the reaction alpha-D-glucosamine 1-phosphate + acetyl-CoA = N-acetyl-alpha-D-glucosamine 1-phosphate + CoA + H(+). It catalyses the reaction N-acetyl-alpha-D-glucosamine 1-phosphate + UTP + H(+) = UDP-N-acetyl-alpha-D-glucosamine + diphosphate. It participates in nucleotide-sugar biosynthesis; UDP-N-acetyl-alpha-D-glucosamine biosynthesis; N-acetyl-alpha-D-glucosamine 1-phosphate from alpha-D-glucosamine 6-phosphate (route II): step 2/2. It functions in the pathway nucleotide-sugar biosynthesis; UDP-N-acetyl-alpha-D-glucosamine biosynthesis; UDP-N-acetyl-alpha-D-glucosamine from N-acetyl-alpha-D-glucosamine 1-phosphate: step 1/1. The protein operates within bacterial outer membrane biogenesis; LPS lipid A biosynthesis. Its function is as follows. Catalyzes the last two sequential reactions in the de novo biosynthetic pathway for UDP-N-acetylglucosamine (UDP-GlcNAc). The C-terminal domain catalyzes the transfer of acetyl group from acetyl coenzyme A to glucosamine-1-phosphate (GlcN-1-P) to produce N-acetylglucosamine-1-phosphate (GlcNAc-1-P), which is converted into UDP-GlcNAc by the transfer of uridine 5-monophosphate (from uridine 5-triphosphate), a reaction catalyzed by the N-terminal domain. The chain is Bifunctional protein GlmU from Escherichia coli O45:K1 (strain S88 / ExPEC).